The chain runs to 226 residues: Late protein I226R (226 aa).

An N-terminal signal peptide occupies residues 1–16 (MKMETFLVCLFHNAAG). The N-linked (GlcNAc...) asparagine; by host glycan is linked to Asn-164.

This sequence belongs to the asfivirus I226R family.

In terms of biological role, plays a role in the inhibition of host NF-kappa-B and IRF3 signaling pathways. Mechanistically, promotes the degradation of host IKBKG through enhancing its ubiquitination leading to inhibition of both pathways. The polypeptide is Late protein I226R (African swine fever virus (isolate Pig/Kenya/KEN-50/1950) (ASFV)).